The sequence spans 663 residues: DNA ligase (663 aa).

Residues 31-35 (DFEYD), 80-81 (SL), and E110 each bind NAD(+). K112 functions as the N6-AMP-lysine intermediate in the catalytic mechanism. Residues R133, E168, K284, and K308 each contribute to the NAD(+) site. Zn(2+) contacts are provided by C402, C405, C420, and C425. The 78-residue stretch at 586–663 (IKDNRFEGKT…DEDKFRKMIE (78 aa)) folds into the BRCT domain.

The protein belongs to the NAD-dependent DNA ligase family. LigA subfamily. Mg(2+) is required as a cofactor. It depends on Mn(2+) as a cofactor.

It catalyses the reaction NAD(+) + (deoxyribonucleotide)n-3'-hydroxyl + 5'-phospho-(deoxyribonucleotide)m = (deoxyribonucleotide)n+m + AMP + beta-nicotinamide D-nucleotide.. DNA ligase that catalyzes the formation of phosphodiester linkages between 5'-phosphoryl and 3'-hydroxyl groups in double-stranded DNA using NAD as a coenzyme and as the energy source for the reaction. It is essential for DNA replication and repair of damaged DNA. The sequence is that of DNA ligase from Acetivibrio thermocellus (strain ATCC 27405 / DSM 1237 / JCM 9322 / NBRC 103400 / NCIMB 10682 / NRRL B-4536 / VPI 7372) (Clostridium thermocellum).